A 59-amino-acid chain; its full sequence is Small ribosomal subunit protein bS21 (59 aa).

It belongs to the bacterial ribosomal protein bS21 family.

The polypeptide is Small ribosomal subunit protein bS21 (Acaryochloris marina (strain MBIC 11017)).